A 356-amino-acid chain; its full sequence is Putative [LysW]-L-2-aminoadipate/[LysW]-L-glutamate phosphate reductase (356 aa).

11–14 (SGYT) lines the NADP(+) pocket. The active site involves Cys-157. Asn-323 contributes to the NADP(+) binding site.

The protein belongs to the NAGSA dehydrogenase family. Type 1 subfamily. LysY sub-subfamily.

It localises to the cytoplasm. It catalyses the reaction [amino-group carrier protein]-C-terminal-N-(1-carboxy-5-oxopentan-1-yl)-L-glutamine + phosphate + NADP(+) = [amino-group carrier protein]-C-terminal-N-(1-carboxy-5-phosphooxy-5-oxopentan-1-yl)-L-glutamine + NADPH + H(+). It carries out the reaction [amino-group carrier protein]-C-terminal-gamma-(L-glutamyl-5-semialdehyde)-L-glutamate + phosphate + NADP(+) = [amino-group carrier protein]-C-terminal-gamma-(5-phospho-L-glutamyl)-L-glutamate + NADPH + H(+). The protein operates within amino-acid biosynthesis; L-lysine biosynthesis via AAA pathway; L-lysine from L-alpha-aminoadipate (Thermus route): step 3/5. It participates in amino-acid biosynthesis; L-arginine biosynthesis. Functionally, involved in both the arginine and lysine biosynthetic pathways. This Ignicoccus hospitalis (strain KIN4/I / DSM 18386 / JCM 14125) protein is Putative [LysW]-L-2-aminoadipate/[LysW]-L-glutamate phosphate reductase.